The following is a 1801-amino-acid chain: U3 small nucleolar RNA-associated protein 10 (1801 aa).

The stretch at 582–619 is one HEAT 1 repeat; sequence IDFQALVPFVLVALGDVSERIRREAAAVLAALGALYKK. 2 helical membrane-spanning segments follow: residues 945 to 965 and 1001 to 1021; these read IQSG…AIVN and ALLL…HSVM. HEAT repeat units lie at residues 1045-1082, 1252-1289, 1296-1334, and 1757-1794; these read QTID…AFEH, LSLI…QNPE, NRML…KYGK, and ALLP…VLGE.

The protein belongs to the HEATR1/UTP10 family. In terms of assembly, component of the ribosomal small subunit (SSU) processome.

The protein resides in the nucleus. It localises to the nucleolus. Its subcellular location is the membrane. In terms of biological role, involved in nucleolar processing of pre-18S ribosomal RNA. Involved in ribosome biosynthesis. This chain is U3 small nucleolar RNA-associated protein 10, found in Aspergillus terreus (strain NIH 2624 / FGSC A1156).